Consider the following 367-residue polypeptide: Glutamate 5-kinase (367 aa).

Lys-9 serves as a coordination point for ATP. Substrate is bound by residues Ser-49, Asp-136, and Asn-148. ATP is bound by residues 168-169 (TD) and 210-216 (TGGMKSK). In terms of domain architecture, PUA spans 276–350 (SGQIEVDAGA…GMQSQDIQVR (75 aa)).

It belongs to the glutamate 5-kinase family.

Its subcellular location is the cytoplasm. It catalyses the reaction L-glutamate + ATP = L-glutamyl 5-phosphate + ADP. The protein operates within amino-acid biosynthesis; L-proline biosynthesis; L-glutamate 5-semialdehyde from L-glutamate: step 1/2. Catalyzes the transfer of a phosphate group to glutamate to form L-glutamate 5-phosphate. The chain is Glutamate 5-kinase from Bacillus cereus (strain B4264).